The chain runs to 275 residues: Large ribosomal subunit protein uL2 (275 aa).

Residues 223 to 275 are disordered; it reads VAMNPVDHPHGGGEGRTSGGRHPVSPWGQPTKGYKTRSNKRTDKYIVRRRNKK.

Belongs to the universal ribosomal protein uL2 family. Part of the 50S ribosomal subunit. Forms a bridge to the 30S subunit in the 70S ribosome.

One of the primary rRNA binding proteins. Required for association of the 30S and 50S subunits to form the 70S ribosome, for tRNA binding and peptide bond formation. It has been suggested to have peptidyltransferase activity; this is somewhat controversial. Makes several contacts with the 16S rRNA in the 70S ribosome. In Shewanella pealeana (strain ATCC 700345 / ANG-SQ1), this protein is Large ribosomal subunit protein uL2.